We begin with the raw amino-acid sequence, 217 residues long: Ras-related protein RABA1e (217 aa).

GTP is bound at residue 20 to 27; sequence GDSGVGKS. The short motif at 42 to 50 is the Effector region element; that stretch reads SKSTIGVEF. GTP is bound by residues 68-72, 126-129, and 156-157; these read DTAGQ, NKAD, and SA. S-geranylgeranyl cysteine attachment occurs at residues Cys214 and Cys215.

Belongs to the small GTPase superfamily. Rab family.

Its subcellular location is the cell membrane. In terms of biological role, intracellular vesicle trafficking and protein transport. This Arabidopsis thaliana (Mouse-ear cress) protein is Ras-related protein RABA1e (RABA1E).